The chain runs to 297 residues: Phosphatidylglycerol--prolipoprotein diacylglyceryl transferase (297 aa).

3 helical membrane-spanning segments follow: residues 17–37 (LAVRWYGLMYLVGFIAAIVVG), 59–79 (MLFYGVLGTVLGGRLGYVLFY), and 97–117 (GGMSFHGGFLGVTLAMVLFAW). Residue Arg142 participates in a 1,2-diacyl-sn-glycero-3-phospho-(1'-sn-glycerol) binding. The next 2 helical transmembrane spans lie at 230–250 (MGAVSALFLIGYGLARFTVEF) and 257–277 (FLGLLALGLSMGQWLSLPMIV).

This sequence belongs to the Lgt family.

The protein resides in the cell inner membrane. The enzyme catalyses L-cysteinyl-[prolipoprotein] + a 1,2-diacyl-sn-glycero-3-phospho-(1'-sn-glycerol) = an S-1,2-diacyl-sn-glyceryl-L-cysteinyl-[prolipoprotein] + sn-glycerol 1-phosphate + H(+). It participates in protein modification; lipoprotein biosynthesis (diacylglyceryl transfer). Catalyzes the transfer of the diacylglyceryl group from phosphatidylglycerol to the sulfhydryl group of the N-terminal cysteine of a prolipoprotein, the first step in the formation of mature lipoproteins. This Burkholderia multivorans (strain ATCC 17616 / 249) protein is Phosphatidylglycerol--prolipoprotein diacylglyceryl transferase.